Consider the following 484-residue polypeptide: Aspartyl/glutamyl-tRNA(Asn/Gln) amidotransferase subunit B (484 aa).

This sequence belongs to the GatB/GatE family. GatB subfamily. Heterotrimer of A, B and C subunits.

It carries out the reaction L-glutamyl-tRNA(Gln) + L-glutamine + ATP + H2O = L-glutaminyl-tRNA(Gln) + L-glutamate + ADP + phosphate + H(+). The enzyme catalyses L-aspartyl-tRNA(Asn) + L-glutamine + ATP + H2O = L-asparaginyl-tRNA(Asn) + L-glutamate + ADP + phosphate + 2 H(+). Functionally, allows the formation of correctly charged Asn-tRNA(Asn) or Gln-tRNA(Gln) through the transamidation of misacylated Asp-tRNA(Asn) or Glu-tRNA(Gln) in organisms which lack either or both of asparaginyl-tRNA or glutaminyl-tRNA synthetases. The reaction takes place in the presence of glutamine and ATP through an activated phospho-Asp-tRNA(Asn) or phospho-Glu-tRNA(Gln). The sequence is that of Aspartyl/glutamyl-tRNA(Asn/Gln) amidotransferase subunit B from Anaeromyxobacter sp. (strain K).